A 285-amino-acid polypeptide reads, in one-letter code: Pseudouridine-5'-phosphate glycosidase (285 aa).

Catalysis depends on E17, which acts as the Proton donor. Residues K77 and V97 each coordinate substrate. D126 provides a ligand contact to Mn(2+). Position 128–130 (S128–D130) interacts with substrate. K147 functions as the Nucleophile in the catalytic mechanism.

This sequence belongs to the pseudouridine-5'-phosphate glycosidase family. As to quaternary structure, homotrimer. Requires Mn(2+) as cofactor.

The enzyme catalyses D-ribose 5-phosphate + uracil = psi-UMP + H2O. Functionally, catalyzes the reversible cleavage of pseudouridine 5'-phosphate (PsiMP) to ribose 5-phosphate and uracil. Functions biologically in the cleavage direction, as part of a pseudouridine degradation pathway. The sequence is that of Pseudouridine-5'-phosphate glycosidase from Thermotoga sp. (strain RQ2).